The following is a 758-amino-acid chain: Dachshund homolog 1 (758 aa).

Disordered regions lie at residues 1–105 and 134–185; these read MAVP…SNCN and INAS…TPQN. The span at 20–53 shows a compositional bias: low complexity; the sequence is ISTSASSSGTTTSTSSATSSPAPSIGPPASSGPT. Gly residues predominate over residues 73-102; that stretch reads TGGGGGGGGSGGGGGSSGNGGGGGGGGGGS. Residues 140–163 show a composition bias toward low complexity; that stretch reads SSSSSSSSSSSSSSSSSSSSSSSS. Residues 174 to 185 are compositionally biased toward polar residues; that stretch reads STPSPVENTPQN. Residues 189 to 275 are DACHbox-N; that stretch reads KMVDLRGAKV…LISRKDFETL (87 aa). The segment at 189–384 is interaction with SIX6 and HDAC3; it reads KMVDLRGAKV…VGSSDGSWDK (196 aa). Disordered stretches follow at residues 280–302, 358–414, 474–532, and 544–564; these read TNAS…PENS, SNNQ…PLSH, SPPS…RIPV, and MGLS…GHDM. 3 stretches are compositionally biased toward polar residues: residues 292–301, 358–380, and 387–399; these read RTQSVTSPEN, SNNQ…SSDG, and LPSS…QASI. Position 491 is a phosphoserine (Ser491). A compositionally biased stretch (low complexity) spans 506–524; it reads SHPSSHRSSSVSSSPARTE. Basic and acidic residues predominate over residues 555 to 564; sequence KEGDLAGHDM. The segment at 616–696 is DACHbox-C; sequence SSIETLLTNI…KAKRKLQEAL (81 aa). An interaction with SIN3A region spans residues 627–706; sequence GLLKVAIDNA…EFETKRREQA (80 aa). The stretch at 630–718 forms a coiled coil; the sequence is KVAIDNARAQ…TLKQAASTDS (89 aa).

It belongs to the DACH/dachshund family. In terms of assembly, interacts with SIX1, SIX6 and EYA3. Interacts with NCOR1 and HDAC3 through its N-terminus. Interacts with SIN3A through its C-terminus. Interacts with SMAD3 and SMAD4. In terms of tissue distribution, widely expressed. Isoform 2 is found in brain, heart, kidney, liver, leukocytes and spleen. Isoform 3 is found in liver and heart. Isoform 4 is found in spleen.

The protein resides in the nucleus. In terms of biological role, transcription factor that is involved in regulation of organogenesis. Seems to be a regulator of SIX1, SIX6 and probably SIX5. Corepression of precursor cell proliferation in myoblasts by SIX1 is switched to coactivation through recruitment of EYA3 to the SIX1-DACH1 complex. Transcriptional activation also seems to involve association of CREBBP. Seems to act as a corepressor of SIX6 in regulating proliferation by directly repressing cyclin-dependent kinase inhibitors, including the p27Kip1 promoter. Inhibits TGF-beta signaling through interaction with SMAD4 and NCOR1. Binds to chromatin DNA via its DACHbox-N domain. This chain is Dachshund homolog 1 (DACH1), found in Homo sapiens (Human).